The following is a 1087-amino-acid chain: Exportin-7-A (1087 aa).

The region spanning 30 to 96 (AEKALVEFTN…RNYVLTYLAT (67 aa)) is the Importin N-terminal domain.

Belongs to the exportin family. Expressed in oocytes (at protein level).

The protein resides in the cytoplasm. Its subcellular location is the nucleus. Its function is as follows. Mediates the nuclear export of proteins (cargos) with broad substrate specificity. The protein is Exportin-7-A (xpo7-a) of Xenopus laevis (African clawed frog).